The sequence spans 78 residues: Acyl carrier protein AcpP (78 aa).

The Carrier domain maps to 2 to 77 (SDTAERVKKI…DAVKYIDKAS (76 aa)). At S37 the chain carries O-(pantetheine 4'-phosphoryl)serine.

This sequence belongs to the acyl carrier protein (ACP) family. 4'-phosphopantetheine is transferred from CoA to a specific serine of apo-ACP by AcpS. This modification is essential for activity because fatty acids are bound in thioester linkage to the sulfhydryl of the prosthetic group.

The protein resides in the cytoplasm. It participates in lipid metabolism; fatty acid biosynthesis. Its function is as follows. Carrier of the growing fatty acid chain in fatty acid biosynthesis. This is Acyl carrier protein AcpP from Mesorhizobium japonicum (strain LMG 29417 / CECT 9101 / MAFF 303099) (Mesorhizobium loti (strain MAFF 303099)).